A 334-amino-acid chain; its full sequence is Protein-methionine-sulfoxide reductase catalytic subunit MsrP (334 aa).

The segment at residues 1 to 44 (MKKNQFLKESDVTAESVFFMKRRQVLKALGISAAALSLPHAAHA) is a signal peptide (tat-type signal). Mo-molybdopterin-binding positions include Asn88, 91–92 (YE), Cys146, Thr181, Asn233, Arg238, and 249–251 (GIK).

This sequence belongs to the MsrP family. Heterodimer of a catalytic subunit (MsrP) and a heme-binding subunit (MsrQ). The cofactor is Mo-molybdopterin. In terms of processing, predicted to be exported by the Tat system. The position of the signal peptide cleavage has not been experimentally proven.

The protein resides in the periplasm. The enzyme catalyses L-methionyl-[protein] + a quinone + H2O = L-methionyl-(S)-S-oxide-[protein] + a quinol. It catalyses the reaction L-methionyl-[protein] + a quinone + H2O = L-methionyl-(R)-S-oxide-[protein] + a quinol. Functionally, part of the MsrPQ system that repairs oxidized periplasmic proteins containing methionine sulfoxide residues (Met-O), using respiratory chain electrons. Thus protects these proteins from oxidative-stress damage caused by reactive species of oxygen and chlorine generated by the host defense mechanisms. MsrPQ is essential for the maintenance of envelope integrity under bleach stress, rescuing a wide series of structurally unrelated periplasmic proteins from methionine oxidation, including the primary periplasmic chaperone SurA and the lipoprotein Pal. The catalytic subunit MsrP is non-stereospecific, being able to reduce both (R-) and (S-) diastereoisomers of methionine sulfoxide. This Shigella sonnei (strain Ss046) protein is Protein-methionine-sulfoxide reductase catalytic subunit MsrP.